Reading from the N-terminus, the 633-residue chain is Pesticidal crystal protein Cry2Ad (633 aa).

It belongs to the delta endotoxin family.

Its function is as follows. Promotes colloidosmotic lysis by binding to the midgut epithelial cells of insects. The polypeptide is Pesticidal crystal protein Cry2Ad (cry2Ad) (Bacillus thuringiensis).